The primary structure comprises 296 residues: Probable porphobilinogen deaminase (296 aa).

Cys-241 carries the S-(dipyrrolylmethanemethyl)cysteine modification.

This sequence belongs to the HMBS family. Requires dipyrromethane as cofactor.

It catalyses the reaction 4 porphobilinogen + H2O = hydroxymethylbilane + 4 NH4(+). It participates in porphyrin-containing compound metabolism; protoporphyrin-IX biosynthesis; coproporphyrinogen-III from 5-aminolevulinate: step 2/4. Functionally, tetrapolymerization of the monopyrrole PBG into the hydroxymethylbilane pre-uroporphyrinogen in several discrete steps. This Pyrobaculum neutrophilum (strain DSM 2338 / JCM 9278 / NBRC 100436 / V24Sta) (Thermoproteus neutrophilus) protein is Probable porphobilinogen deaminase.